Reading from the N-terminus, the 237-residue chain is Small ribosomal subunit protein uS5 (237 aa).

The interval 1-59 is disordered; sequence MADETNLEGVAAVEATGGEPQREGRGRGRGRGGNDRGGERGGRGRRDDRRGRGNNDEEG. The span at 20–55 shows a compositional bias: basic and acidic residues; sequence PQREGRGRGRGRGGNDRGGERGGRGRRDDRRGRGNN. In terms of domain architecture, S5 DRBM spans 63–126; that stretch reads LIEKLVHINR…AAAKRAMVRV (64 aa).

Belongs to the universal ribosomal protein uS5 family. As to quaternary structure, part of the 30S ribosomal subunit. Contacts proteins S4 and S8.

In terms of biological role, with S4 and S12 plays an important role in translational accuracy. Functionally, located at the back of the 30S subunit body where it stabilizes the conformation of the head with respect to the body. This is Small ribosomal subunit protein uS5 from Novosphingobium aromaticivorans (strain ATCC 700278 / DSM 12444 / CCUG 56034 / CIP 105152 / NBRC 16084 / F199).